We begin with the raw amino-acid sequence, 86 residues long: Small ribosomal subunit protein bS16 (86 aa).

This sequence belongs to the bacterial ribosomal protein bS16 family.

This chain is Small ribosomal subunit protein bS16, found in Acidithiobacillus ferrooxidans (strain ATCC 23270 / DSM 14882 / CIP 104768 / NCIMB 8455) (Ferrobacillus ferrooxidans (strain ATCC 23270)).